The chain runs to 290 residues: Expansin-A26 (290 aa).

The signal sequence occupies residues 1–29 (MDTTTTMAPLPLLTTTSLLLFFFLASSFA). The disordered stretch occupies residues 45–67 (DGGGDGEGGGGGDGEGGGGGGGA). The Expansin-like EG45 domain maps to 101–196 (GGACGYKDAD…RKVACVRQGG (96 aa)). Residues 206–286 (SYNMVMVKNV…DWTYDNTYQA (81 aa)) enclose the Expansin-like CBD domain. N-linked (GlcNAc...) asparagine glycosylation occurs at Asn250.

It belongs to the expansin family. Expansin A subfamily. As to expression, expressed in flowers.

Its subcellular location is the secreted. It is found in the cell wall. The protein resides in the membrane. Its function is as follows. May cause loosening and extension of plant cell walls by disrupting non-covalent bonding between cellulose microfibrils and matrix glucans. No enzymatic activity has been found. May be required for rapid internodal elongation in deepwater rice during submergence. The protein is Expansin-A26 (EXPA26) of Oryza sativa subsp. japonica (Rice).